Here is a 231-residue protein sequence, read N- to C-terminus: Uracil-DNA glycosylase (231 aa).

D74 serves as the catalytic Proton acceptor.

The protein belongs to the uracil-DNA glycosylase (UDG) superfamily. UNG family.

The protein localises to the cytoplasm. It carries out the reaction Hydrolyzes single-stranded DNA or mismatched double-stranded DNA and polynucleotides, releasing free uracil.. In terms of biological role, excises uracil residues from the DNA which can arise as a result of misincorporation of dUMP residues by DNA polymerase or due to deamination of cytosine. This is Uracil-DNA glycosylase from Campylobacter jejuni (strain RM1221).